A 166-amino-acid chain; its full sequence is Putative transmembrane protein encoded by LINC00477 (166 aa).

Asparagine 7 carries N-linked (GlcNAc...) asparagine glycosylation. A run of 3 helical transmembrane segments spans residues 15–35 (VSSF…FFLC), 41–61 (MTGC…VLGP), and 63–83 (PMGM…RFLG). Positions 127-166 (LPVPHPPSPLSKCPQHPRPRRTKGPGLRKLWGPGPPFFPS) are disordered.

It localises to the membrane. The sequence is that of Putative transmembrane protein encoded by LINC00477 (LINC00477) from Homo sapiens (Human).